Here is a 247-residue protein sequence, read N- to C-terminus: MENSDVINFSCLEKELHSALQADRKYQRENDAKFRALNQKVASYEEFRDIVLASHLKPLDRNDISGSPRKQPWNPVACRTNYVCASSEQVQPQLSEVQPRSASEFIRDWRRFAGCSFEKYSLLVSLGGEALQKIFSTEIGLGLLGEFLLILSQCLKSGDEDRVTGVLDGLSKTGRFSINLSLLSQAEQEACEELFNKLKVAAGECHPYKDNSNTSVVCEAGLTHMEDNKTDITTTLKELAGKYGTEK.

Residues 12 to 32 adopt a coiled-coil conformation; the sequence is LEKELHSALQADRKYQRENDA.

It belongs to the DNAAF19/PR46b family. As to quaternary structure, homodimer. As to expression, expressed in all cells bearing motile cilia.

It localises to the cytoplasm. The protein localises to the cell projection. The protein resides in the cilium. It is found in the flagellum. Dynein-attachment factor required for cilia motility. The chain is Dynein axonemal assembly factor 19 (dnaaf19) from Danio rerio (Zebrafish).